The primary structure comprises 348 residues: Glucose 1-dehydrogenase 2 (348 aa).

Cys39 is a binding site for Zn(2+). Thr41 provides a ligand contact to substrate. 2 residues coordinate Zn(2+): His64 and Glu65. Positions 110 and 146 each coordinate substrate. Residue Glu146 participates in Zn(2+) binding. NADP(+) contacts are provided by residues 178–181, 260–262, and 289–291; these read AGPV, LGV, and SVN. Asn291 is a binding site for substrate.

Belongs to the zinc-containing alcohol dehydrogenase family. Glucose 1-dehydrogenase subfamily. Requires Zn(2+) as cofactor.

It carries out the reaction D-glucose + NAD(+) = D-glucono-1,5-lactone + NADH + H(+). The catalysed reaction is D-glucose + NADP(+) = D-glucono-1,5-lactone + NADPH + H(+). Its function is as follows. Catalyzes the NAD(P)(+)-dependent oxidation of D-glucose to D-gluconate via gluconolactone. Can utilize both NAD(+) and NADP(+) as electron acceptor. Is involved in the degradation of glucose through a non-phosphorylative variant of the Entner-Doudoroff pathway. This is Glucose 1-dehydrogenase 2 from Vulcanisaeta moutnovskia (strain 768-28).